Reading from the N-terminus, the 238-residue chain is Uridylate kinase (238 aa).

12 to 15 is a binding site for ATP; it reads KLSG. Residue G54 coordinates UMP. ATP is bound by residues G55 and R59. Residues D74 and 135–142 contribute to the UMP site; that span reads TGNPYFTT. ATP is bound by residues T162, N163, Y168, and D171.

The protein belongs to the UMP kinase family. As to quaternary structure, homohexamer.

Its subcellular location is the cytoplasm. The enzyme catalyses UMP + ATP = UDP + ADP. Its pathway is pyrimidine metabolism; CTP biosynthesis via de novo pathway; UDP from UMP (UMPK route): step 1/1. Inhibited by UTP. In terms of biological role, catalyzes the reversible phosphorylation of UMP to UDP. This Nitrobacter hamburgensis (strain DSM 10229 / NCIMB 13809 / X14) protein is Uridylate kinase.